Reading from the N-terminus, the 109-residue chain is UPF0060 membrane protein mma_0129 (109 aa).

The next 4 helical transmembrane spans lie at 7–27 (VALF…PYLW), 31–51 (GASI…VWLL), 63–83 (AAYG…VDGI), and 87–107 (NWDF…LFAP).

This sequence belongs to the UPF0060 family.

It localises to the cell inner membrane. This chain is UPF0060 membrane protein mma_0129, found in Janthinobacterium sp. (strain Marseille) (Minibacterium massiliensis).